A 298-amino-acid polypeptide reads, in one-letter code: Ribosomal RNA small subunit methyltransferase H (298 aa).

S-adenosyl-L-methionine is bound by residues 31-33, Asp-50, Tyr-80, Asp-95, and Gln-102; that span reads GGH. Positions 255-298 are disordered; the sequence is AEKDLYGNTNKPFKSVGKAIDPDDEEKERNNRARSARLRIAERE.

This sequence belongs to the methyltransferase superfamily. RsmH family.

Its subcellular location is the cytoplasm. The enzyme catalyses cytidine(1402) in 16S rRNA + S-adenosyl-L-methionine = N(4)-methylcytidine(1402) in 16S rRNA + S-adenosyl-L-homocysteine + H(+). In terms of biological role, specifically methylates the N4 position of cytidine in position 1402 (C1402) of 16S rRNA. The protein is Ribosomal RNA small subunit methyltransferase H of Cytophaga hutchinsonii (strain ATCC 33406 / DSM 1761 / CIP 103989 / NBRC 15051 / NCIMB 9469 / D465).